The following is a 1047-amino-acid chain: Carbamoyl phosphate synthase large chain (1047 aa).

Residues 1-398 are carboxyphosphate synthetic domain; sequence MPRRDDIHRI…ALMKAIASLD (398 aa). Positions 129, 169, 175, 176, 208, 210, 215, 241, 242, 243, 284, and 296 each coordinate ATP. One can recognise an ATP-grasp 1 domain in the interval 133–325; it reads YEFLKAMGEP…IARIAAKIAA (193 aa). 3 residues coordinate Mg(2+): glutamine 284, glutamate 296, and asparagine 298. The Mn(2+) site is built by glutamine 284, glutamate 296, and asparagine 298. Positions 399-539 are oligomerization domain; it reads NAFSSNIRLH…YSTYEDEDET (141 aa). The carbamoyl phosphate synthetic domain stretch occupies residues 540–916; sequence PDLSGSIMII…ALRKSLQRSI (377 aa). The ATP-grasp 2 domain occupies 665–854; it reads SRVIEGLGIK…WVRLAVECMI (190 aa). Residues arginine 701, lysine 738, leucine 740, glutamate 745, glycine 770, valine 771, histidine 772, serine 773, glutamine 813, and glutamate 825 each contribute to the ATP site. Residues glutamine 813, glutamate 825, and asparagine 827 each contribute to the Mg(2+) site. Mn(2+) is bound by residues glutamine 813, glutamate 825, and asparagine 827. The 138-residue stretch at 910–1047 folds into the MGS-like domain; the sequence is KSLQRSISSV…REIGDYLQVS (138 aa). An allosteric domain region spans residues 916–1047; it reads ISSVLITVRD…REIGDYLQVS (132 aa).

It belongs to the CarB family. As to quaternary structure, composed of two chains; the small (or glutamine) chain promotes the hydrolysis of glutamine to ammonia, which is used by the large (or ammonia) chain to synthesize carbamoyl phosphate. Tetramer of heterodimers (alpha,beta)4. The cofactor is Mg(2+). Mn(2+) serves as cofactor.

It catalyses the reaction hydrogencarbonate + L-glutamine + 2 ATP + H2O = carbamoyl phosphate + L-glutamate + 2 ADP + phosphate + 2 H(+). The catalysed reaction is hydrogencarbonate + NH4(+) + 2 ATP = carbamoyl phosphate + 2 ADP + phosphate + 2 H(+). The protein operates within amino-acid biosynthesis; L-arginine biosynthesis; carbamoyl phosphate from bicarbonate: step 1/1. It participates in pyrimidine metabolism; UMP biosynthesis via de novo pathway; (S)-dihydroorotate from bicarbonate: step 1/3. Large subunit of the glutamine-dependent carbamoyl phosphate synthetase (CPSase). CPSase catalyzes the formation of carbamoyl phosphate from the ammonia moiety of glutamine, carbonate, and phosphate donated by ATP, constituting the first step of 2 biosynthetic pathways, one leading to arginine and/or urea and the other to pyrimidine nucleotides. The large subunit (synthetase) binds the substrates ammonia (free or transferred from glutamine from the small subunit), hydrogencarbonate and ATP and carries out an ATP-coupled ligase reaction, activating hydrogencarbonate by forming carboxy phosphate which reacts with ammonia to form carbamoyl phosphate. The chain is Carbamoyl phosphate synthase large chain from Thermoplasma acidophilum (strain ATCC 25905 / DSM 1728 / JCM 9062 / NBRC 15155 / AMRC-C165).